Consider the following 93-residue polypeptide: Putative defensin-like protein 190 (93 aa).

The first 30 residues, 1–30, serve as a signal peptide directing secretion; that stretch reads MKMAKAAATNDFGFITCLVIFLVLAGISNG. 4 disulfides stabilise this stretch: cysteine 39-cysteine 89, cysteine 55-cysteine 75, cysteine 60-cysteine 84, and cysteine 64-cysteine 86.

Belongs to the DEFL family.

It is found in the secreted. This is Putative defensin-like protein 190 from Arabidopsis thaliana (Mouse-ear cress).